Consider the following 256-residue polypeptide: Thiazole synthase (256 aa).

Lys-95 acts as the Schiff-base intermediate with DXP in catalysis. Residues Gly-156, 182–183 (AG), and 204–205 (NT) contribute to the 1-deoxy-D-xylulose 5-phosphate site.

This sequence belongs to the ThiG family. As to quaternary structure, homotetramer. Forms heterodimers with either ThiH or ThiS.

The protein resides in the cytoplasm. It carries out the reaction [ThiS sulfur-carrier protein]-C-terminal-Gly-aminoethanethioate + 2-iminoacetate + 1-deoxy-D-xylulose 5-phosphate = [ThiS sulfur-carrier protein]-C-terminal Gly-Gly + 2-[(2R,5Z)-2-carboxy-4-methylthiazol-5(2H)-ylidene]ethyl phosphate + 2 H2O + H(+). It functions in the pathway cofactor biosynthesis; thiamine diphosphate biosynthesis. Its function is as follows. Catalyzes the rearrangement of 1-deoxy-D-xylulose 5-phosphate (DXP) to produce the thiazole phosphate moiety of thiamine. Sulfur is provided by the thiocarboxylate moiety of the carrier protein ThiS. In vitro, sulfur can be provided by H(2)S. The chain is Thiazole synthase from Escherichia coli O6:H1 (strain CFT073 / ATCC 700928 / UPEC).